A 197-amino-acid polypeptide reads, in one-letter code: MVKVGVIGLQGDVEEHIWAARRALENLGVSGDVIWLKKPEQLENISAIIIPGGESTTISRLMVKNGLFEPVKKLGEEGLPIMGTCAGLIMLSKEVIGATPEQKFLELLDVKVNRNAYGRQVDSFEAPIKLAFSGEPFPGVFIRAPRIVELLSERVKPIAWLGDRVVGVEQDNIIGLEFHPELTDDTRVHEYFLRKAV.

53 to 55 (GES) provides a ligand contact to L-glutamine. The active-site Nucleophile is Cys-85. Residues Arg-114 and 142 to 143 (IR) each bind L-glutamine. Catalysis depends on charge relay system residues His-179 and Glu-181.

It belongs to the glutaminase PdxT/SNO family. In the presence of PdxS, forms a dodecamer of heterodimers. Only shows activity in the heterodimer.

It carries out the reaction aldehydo-D-ribose 5-phosphate + D-glyceraldehyde 3-phosphate + L-glutamine = pyridoxal 5'-phosphate + L-glutamate + phosphate + 3 H2O + H(+). It catalyses the reaction L-glutamine + H2O = L-glutamate + NH4(+). The protein operates within cofactor biosynthesis; pyridoxal 5'-phosphate biosynthesis. Its function is as follows. Catalyzes the hydrolysis of glutamine to glutamate and ammonia as part of the biosynthesis of pyridoxal 5'-phosphate. The resulting ammonia molecule is channeled to the active site of PdxS. The sequence is that of Pyridoxal 5'-phosphate synthase subunit PdxT from Thermococcus kodakarensis (strain ATCC BAA-918 / JCM 12380 / KOD1) (Pyrococcus kodakaraensis (strain KOD1)).